Consider the following 333-residue polypeptide: Ribosomal RNA small subunit methyltransferase H (333 aa).

S-adenosyl-L-methionine is bound by residues 39-41 (GGY), Asp57, Phe84, Asp101, and Gln108.

The protein belongs to the methyltransferase superfamily. RsmH family.

It localises to the cytoplasm. The enzyme catalyses cytidine(1402) in 16S rRNA + S-adenosyl-L-methionine = N(4)-methylcytidine(1402) in 16S rRNA + S-adenosyl-L-homocysteine + H(+). In terms of biological role, specifically methylates the N4 position of cytidine in position 1402 (C1402) of 16S rRNA. The protein is Ribosomal RNA small subunit methyltransferase H of Dinoroseobacter shibae (strain DSM 16493 / NCIMB 14021 / DFL 12).